Consider the following 143-residue polypeptide: Large ribosomal subunit protein uL11 (143 aa).

Belongs to the universal ribosomal protein uL11 family. In terms of assembly, part of the ribosomal stalk of the 50S ribosomal subunit. Interacts with L10 and the large rRNA to form the base of the stalk. L10 forms an elongated spine to which L12 dimers bind in a sequential fashion forming a multimeric L10(L12)X complex. In terms of processing, one or more lysine residues are methylated.

Functionally, forms part of the ribosomal stalk which helps the ribosome interact with GTP-bound translation factors. The polypeptide is Large ribosomal subunit protein uL11 (Treponema denticola (strain ATCC 35405 / DSM 14222 / CIP 103919 / JCM 8153 / KCTC 15104)).